We begin with the raw amino-acid sequence, 790 residues long: LMBR1 domain-containing protein 2 homolog B (790 aa).

The segment covering 1–21 (MSSNTTTPTPTSTPTPTSSPS) has biased composition (low complexity). Positions 1–22 (MSSNTTTPTPTSTPTPTSSPSI) are disordered. The next 5 helical transmembrane spans lie at 34–54 (FGNL…VLIG), 66–86 (IYAT…AYLV), 128–148 (FLYF…QSFS), 167–187 (VILY…ILSV), and 195–215 (FLSF…TITM). A coiled-coil region spans residues 236–266 (LRNYRVEAVVLKTELEDVKRQLIDHLKLIKT). 3 helical membrane-spanning segments follow: residues 401-421 (FIIA…SEIV), 442-462 (PGIG…VCSY), and 539-559 (FTLF…FNLH). Disordered regions lie at residues 630-665 (SQLD…PKLS), 701-751 (LGEK…TKDK), and 765-790 (SFQD…KNKK). Residues 644–665 (IDSSNRYKPTPTKTSINIPKLS) show a composition bias toward polar residues. Positions 706 to 734 (NASNNNNNNNNNNNNNNSNNKNSNNNNNS) are enriched in low complexity. Over residues 735-746 (ILTSNYESYSTP) the composition is skewed to polar residues. Over residues 766–778 (FQDDDDHTFDDIE) the composition is skewed to acidic residues.

Belongs to the LIMR family.

Its subcellular location is the membrane. The sequence is that of LMBR1 domain-containing protein 2 homolog B from Dictyostelium discoideum (Social amoeba).